Reading from the N-terminus, the 115-residue chain is UPF0122 protein NT01CX_2214 (115 aa).

This sequence belongs to the UPF0122 family.

Functionally, might take part in the signal recognition particle (SRP) pathway. This is inferred from the conservation of its genetic proximity to ftsY/ffh. May be a regulatory protein. In Clostridium novyi (strain NT), this protein is UPF0122 protein NT01CX_2214.